Consider the following 116-residue polypeptide: Aspartate 1-decarboxylase (116 aa).

The active-site Schiff-base intermediate with substrate; via pyruvic acid is the serine 25. At serine 25 the chain carries Pyruvic acid (Ser). Position 57 (threonine 57) interacts with substrate. The active-site Proton donor is the tyrosine 58. 73 to 75 (GAA) contacts substrate.

It belongs to the PanD family. As to quaternary structure, heterooctamer of four alpha and four beta subunits. Pyruvate serves as cofactor. Post-translationally, is synthesized initially as an inactive proenzyme, which is activated by self-cleavage at a specific serine bond to produce a beta-subunit with a hydroxyl group at its C-terminus and an alpha-subunit with a pyruvoyl group at its N-terminus.

It localises to the cytoplasm. It catalyses the reaction L-aspartate + H(+) = beta-alanine + CO2. It functions in the pathway cofactor biosynthesis; (R)-pantothenate biosynthesis; beta-alanine from L-aspartate: step 1/1. Catalyzes the pyruvoyl-dependent decarboxylation of aspartate to produce beta-alanine. The polypeptide is Aspartate 1-decarboxylase (Parabacteroides distasonis (strain ATCC 8503 / DSM 20701 / CIP 104284 / JCM 5825 / NCTC 11152)).